The sequence spans 175 residues: Large ribosomal subunit protein uL10 (175 aa).

It belongs to the universal ribosomal protein uL10 family. In terms of assembly, part of the ribosomal stalk of the 50S ribosomal subunit. The N-terminus interacts with L11 and the large rRNA to form the base of the stalk. The C-terminus forms an elongated spine to which L12 dimers bind in a sequential fashion forming a multimeric L10(L12)X complex.

Its function is as follows. Forms part of the ribosomal stalk, playing a central role in the interaction of the ribosome with GTP-bound translation factors. This chain is Large ribosomal subunit protein uL10, found in Cupriavidus taiwanensis (strain DSM 17343 / BCRC 17206 / CCUG 44338 / CIP 107171 / LMG 19424 / R1) (Ralstonia taiwanensis (strain LMG 19424)).